The primary structure comprises 123 residues: Large ribosomal subunit protein uL29 (123 aa).

It belongs to the universal ribosomal protein uL29 family. Component of the large ribosomal subunit.

It is found in the cytoplasm. In terms of biological role, component of the large ribosomal subunit. The ribosome is a large ribonucleoprotein complex responsible for the synthesis of proteins in the cell. Plays an essential role in early embryonic development. May act as a haploinsufficient tumor suppressor. This is Large ribosomal subunit protein uL29 (rpl35) from Danio rerio (Zebrafish).